The following is a 432-amino-acid chain: Glycerophosphocholine acyltransferase 1 (432 aa).

Residues 1-110 lie on the Cytoplasmic side of the membrane; that stretch reads MYKLDNNDID…DSIFFKNSSR (110 aa). Residue S78 is modified to Phosphoserine. A helical transmembrane segment spans residues 111–131; that stretch reads LEKAFYPFTLFNIFFIGFLMG. Position 132 (R132) is a topological domain, lumenal. Residues 133-153 traverse the membrane as a helical segment; the sequence is FPEWFHVYYTILFFVLMPIRF. Residues 154–162 are Cytoplasmic-facing; that stretch reads YTYYKTKNH. Residues 163–183 form a helical membrane-spanning segment; it reads YFLADFCYFVNMLCLLFIWIF. The Lumenal portion of the chain corresponds to 184–187; it reads PYSY. A helical membrane pass occupies residues 188–208; it reads SLFQSCFAFTFGTLCFAVITW. The Cytoplasmic portion of the chain corresponds to 209 to 221; that stretch reads RNSLVIHSIDKTT. A helical membrane pass occupies residues 222–242; the sequence is SCFIHIIPPCVMYVIYHGLPL. Over 243–263 the chain is Lumenal; that stretch reads EYKIERFPGAIIQSELDIKKN. The chain crosses the membrane as a helical span at residues 264–284; it reads ILWTSLYYLVWQSLYHYFITL. Residues 285-318 lie on the Cytoplasmic side of the membrane; sequence KKSSKIKSGERMTSFEYLTTHQFKNFWAVKLRSP. The helical transmembrane segment at 319–339 threads the bilayer; it reads WPMIIYTLSQYFYQLFTMLLC. At 340 to 346 the chain is on the lumenal side; it reads GIWIRYK. A helical membrane pass occupies residues 347–369; the sequence is LAAALFLTIVFLWASHNGATYYI. Over 370–432 the chain is Cytoplasmic; the sequence is DHYGKNFEKE…DSSSVSSKSD (63 aa). Residues 413–432 are disordered; the sequence is LNVNRDEDFDDSSSVSSKSD.

It belongs to the GPC1 family.

The protein localises to the membrane. The catalysed reaction is sn-glycerol 3-phosphocholine + an acyl-CoA = a 1-acyl-sn-glycero-3-phosphocholine + CoA. It catalyses the reaction sn-glycero-3-phosphoethanolamine + an acyl-CoA = a monoacyl-sn-glycero-3-phosphoethanolamine + CoA. The enzyme catalyses sn-glycero-3-phosphoethanolamine + (9Z)-octadecenoyl-CoA = (9Z-octadecenoyl)-sn-glycero-3-phosphoethanolamine + CoA. It carries out the reaction sn-glycerol 3-phosphocholine + hexadecanoyl-CoA = hexadecanoyl-sn-glycero-3-phosphocholine + CoA. The catalysed reaction is (9Z,12Z)-octadecadienoyl-CoA + sn-glycerol 3-phosphocholine = (9Z,12Z-octadecadienoyl)-sn-glycero-3-phosphocholine + CoA. It catalyses the reaction (12R)-hydroxy-(9Z)-octadecenoyl-CoA + sn-glycerol 3-phosphocholine = (12R-hydroxy-9Z-octadecenoyl)-sn-glycero-3-phosphocholine + CoA. The enzyme catalyses (9Z,12Z,15Z)-octadecatrienoyl-CoA + sn-glycerol 3-phosphocholine = (9Z,12Z,15Z-octadecatrienoyl)-sn-glycero-3-phosphocholine + CoA. It carries out the reaction sn-glycerol 3-phosphocholine + (9Z)-octadecenoyl-CoA = (9Z-octadecenoyl)-sn-glycero-3-phosphocholine + CoA. The catalysed reaction is 1-(9Z-octadecenoyl)-sn-glycero-3-phosphoethanolamine + sn-glycerol 3-phosphocholine = (9Z-octadecenoyl)-sn-glycero-3-phosphocholine + sn-glycero-3-phosphoethanolamine. Its activity is regulated as follows. The GPCAT activity is sensitive to N-ethylmaleimide, phenanthroline, and divalent cations including Ca(2+), Mg(2+), Mn(2+) and Zn(2+). The activity is also inhibited by glycerol-3-phosphate (G3P). In terms of biological role, glycerophosphocholine acyltransferase (GPCAT) that utilizes acyl-CoA to acylate glycero-3-phosphocholine (GPC), forming lysophosphatidylcholine (LPC). Shows broad acyl specificities with a preference for 16:0-CoA, polyunsaturated acyl-CoA, and the hydroxylated ricinoleoyl-CoA. Also catalyzes the acylation of glycero-3-phosphoethanolamine (GPE) with acyl-CoA. In addition to acyl-CoA, GPCAT efficiently utilizes LPC and lysophosphatidylethanolamine (LPE) as acyl donors in the acylation of GPC. Contributes to the maintenance of phosphatidylcholine (PC) homeostasis and might also have specific functions in acyl editing of PC, such as transferring acyl groups modified at the sn-2 position of PC to the sn-1. Involved in postsynthetic PC remodeling that produces more saturated PC species. This is Glycerophosphocholine acyltransferase 1 from Saccharomyces cerevisiae (strain ATCC 204508 / S288c) (Baker's yeast).